The chain runs to 313 residues: Probable cytochrome c oxidase subunit 2 (313 aa).

Residues arginine 5–tyrosine 51 form the RPE1 insert domain. A run of 3 helical transmembrane segments spans residues tyrosine 39–isoleucine 59, leucine 94–isoleucine 114, and leucine 131–proline 151. Cu cation contacts are provided by histidine 233, cysteine 268, cysteine 272, and histidine 276.

It belongs to the cytochrome c oxidase subunit 2 family. The cofactor is Cu cation. Heme is required as a cofactor.

It is found in the cell membrane. The enzyme catalyses 4 Fe(II)-[cytochrome c] + O2 + 8 H(+)(in) = 4 Fe(III)-[cytochrome c] + 2 H2O + 4 H(+)(out). Functionally, subunits I and II form the functional core of the enzyme complex. Electrons originating in cytochrome c are transferred via heme a and Cu(A) to the binuclear center formed by heme a3 and Cu(B). The polypeptide is Probable cytochrome c oxidase subunit 2 (ctaC) (Rickettsia prowazekii (strain Madrid E)).